We begin with the raw amino-acid sequence, 69 residues long: Nodulin-3 (69 aa).

Positions 1–24 (MAKILKFVFAIILFFSLFLLSMEA) are cleaved as a signal peptide.

The protein is Nodulin-3 (ENOD3) of Pisum sativum (Garden pea).